The following is a 36-amino-acid chain: Conotoxin Bt11.4 (36 aa).

4 disulfides stabilise this stretch: C2–C16, C9–C21, C15–C26, and C20–C33.

Belongs to the conotoxin I1 superfamily. As to expression, expressed by the venom duct.

It localises to the secreted. This is Conotoxin Bt11.4 from Conus betulinus (Beech cone).